Reading from the N-terminus, the 178-residue chain is MLEGIIRESISKSAVKALRNDGYLIANIYGKGQENTHCAFKKNDFIRAVKSKTNIIFPVKVGGKEINVVVQEYQKDPITSDLLHVDLMLVQPGVETKFLVPVKTAGSAKGLKNKGVLILSKKRVKVKCSPENLPASYELDVSDLDVGDAILVRDLPELPNVKVIEKESVAIVGVIKAK.

It belongs to the bacterial ribosomal protein bL25 family. CTC subfamily. Part of the 50S ribosomal subunit; part of the 5S rRNA/L5/L18/L25 subcomplex. Contacts the 5S rRNA. Binds to the 5S rRNA independently of L5 and L18.

Functionally, this is one of the proteins that binds to the 5S RNA in the ribosome where it forms part of the central protuberance. The chain is Large ribosomal subunit protein bL25 from Wolinella succinogenes (strain ATCC 29543 / DSM 1740 / CCUG 13145 / JCM 31913 / LMG 7466 / NCTC 11488 / FDC 602W) (Vibrio succinogenes).